The chain runs to 146 residues: Large ribosomal subunit protein uL15 (146 aa).

Basic and acidic residues predominate over residues 1–13; the sequence is MKLNELHPSEGSR. The disordered stretch occupies residues 1–56; that stretch reads MKLNELHPSEGSRHARKRVGRGTSSGFGKTSGRGQKGQHARSGGNTRLGFEGGQMP. The span at 23–35 shows a compositional bias: gly residues; sequence TSSGFGKTSGRGQ.

The protein belongs to the universal ribosomal protein uL15 family. As to quaternary structure, part of the 50S ribosomal subunit.

In terms of biological role, binds to the 23S rRNA. This is Large ribosomal subunit protein uL15 from Lactobacillus delbrueckii subsp. bulgaricus (strain ATCC 11842 / DSM 20081 / BCRC 10696 / JCM 1002 / NBRC 13953 / NCIMB 11778 / NCTC 12712 / WDCM 00102 / Lb 14).